The following is a 347-amino-acid chain: GMP reductase (347 aa).

An NADP(+)-binding site is contributed by 108–131; it reads ADFEKTKQILDLNPALNFVCIDVA. K(+)-binding residues include Gly181 and Gly183. Cys186 (thioimidate intermediate) is an active-site residue. NADP(+) is bound at residue 216 to 239; the sequence is IVSDGGCTTPGDVAKAFGGGADFV.

The protein belongs to the IMPDH/GMPR family. GuaC type 1 subfamily. As to quaternary structure, homotetramer.

It carries out the reaction IMP + NH4(+) + NADP(+) = GMP + NADPH + 2 H(+). In terms of biological role, catalyzes the irreversible NADPH-dependent deamination of GMP to IMP. It functions in the conversion of nucleobase, nucleoside and nucleotide derivatives of G to A nucleotides, and in maintaining the intracellular balance of A and G nucleotides. The protein is GMP reductase of Escherichia coli (strain SMS-3-5 / SECEC).